Here is a 123-residue protein sequence, read N- to C-terminus: Small ribosomal subunit protein uS12 (123 aa).

D89 is subject to 3-methylthioaspartic acid. The disordered stretch occupies residues 101 to 123; it reads TLDTSGVSDRRQSRSKYGAKRPK. Positions 113-123 are enriched in basic residues; it reads SRSKYGAKRPK.

This sequence belongs to the universal ribosomal protein uS12 family. In terms of assembly, part of the 30S ribosomal subunit. Contacts proteins S8 and S17. May interact with IF1 in the 30S initiation complex.

Functionally, with S4 and S5 plays an important role in translational accuracy. Its function is as follows. Interacts with and stabilizes bases of the 16S rRNA that are involved in tRNA selection in the A site and with the mRNA backbone. Located at the interface of the 30S and 50S subunits, it traverses the body of the 30S subunit contacting proteins on the other side and probably holding the rRNA structure together. The combined cluster of proteins S8, S12 and S17 appears to hold together the shoulder and platform of the 30S subunit. This is Small ribosomal subunit protein uS12 from Solidesulfovibrio magneticus (strain ATCC 700980 / DSM 13731 / RS-1) (Desulfovibrio magneticus).